Consider the following 131-residue polypeptide: D-ribose pyranase (131 aa).

Catalysis depends on His20, which acts as the Proton donor. Substrate contacts are provided by residues Asp28, His98, and 120–122 (YSN).

The protein belongs to the RbsD / FucU family. RbsD subfamily. In terms of assembly, homodecamer.

The protein resides in the cytoplasm. It catalyses the reaction beta-D-ribopyranose = beta-D-ribofuranose. It participates in carbohydrate metabolism; D-ribose degradation; D-ribose 5-phosphate from beta-D-ribopyranose: step 1/2. Its function is as follows. Catalyzes the interconversion of beta-pyran and beta-furan forms of D-ribose. This chain is D-ribose pyranase, found in Limosilactobacillus reuteri (strain DSM 20016) (Lactobacillus reuteri).